Here is an 874-residue protein sequence, read N- to C-terminus: MPLQSPLTFSDEQINIGELKQELEKFSSTQKQEFLNHHPVTSLVLARAEYMDLLLTRLWQYFGFNDIYNISLVAVGGYGRGELHPLSDIDILVLSNNKLPTALEAKISEFITLLWDLKLEVGHAVRTVNECAQIGRDDLTVATNLQEARLLCGSEDTFQALKKVVLSDSFWPSETFYRAKIQEQRERHARYHDTTYNLEPDIKSTPGGLRDIHTLSWVARRHFGATSLLEMSRYGFLTDAEYRELVECQDFLWRVRFALHIELRRYDNRLTFAHQAQVAENLGYVGEGNRGVEMMMKEFYRTLRRVAELNKMLLKLFDQAIINGGATENAEILDADFQRRGSLIEARKPALFQARPETILDMFLHIANDSTIEGVSPPTLRQLRTARRRLNKFLHTIPAAREKFLALCRHPNALHKAFSLMHRLGVMAAYLPQWSQIVGQMQFDLFHAYTVDEHSIRLLKHINTFNNPDNHAKHPICCDIYPRMQKKELLIIAAIFHDIGKGRGGDHSVIGEGEAYDFCIEHGLSKPEAKLVGWLVRHHLLMSVTAQRRDIYDPDVITEFAKQVRDEESLEYLVCLTVADICATNPELWNAWKRTLLAELFYSTQRALRRGLENPVDVRERIRHNQQMASALLRKEGFSARQIEVLWQRFKADYFLRHTHTQIAWHCAHLLRMDDPNKPLVLISKKATRGGTEVFVYTKDQPALFATVVAELDRRNFNVHDAQIMTSKDGHVIDTFMVLDQHGEAIDESRHAAVIKHLTHVLEAGRPTKIKTRRTPNKLQHFNVKTKVDFLPTKGKKHTLMEFVALDTPGLLAKVGRTFADLNINLHGAKITTIGERAEDLFILTSEAGGRLSEEQQNELRDKLIEKLSDAVTA.

Residues 1-332 are uridylyltransferase; that stretch reads MPLQSPLTFS…NGGATENAEI (332 aa). Residues 333 to 692 form a uridylyl-removing region; sequence LDADFQRRGS…ISKKATRGGT (360 aa). Positions 451–573 constitute an HD domain; sequence VDEHSIRLLK…VRDEESLEYL (123 aa). ACT domains follow at residues 693 to 777 and 800 to 874; these read EVFV…RTPN and LMEF…AVTA.

It belongs to the GlnD family. It depends on Mg(2+) as a cofactor.

It catalyses the reaction [protein-PII]-L-tyrosine + UTP = [protein-PII]-uridylyl-L-tyrosine + diphosphate. The enzyme catalyses [protein-PII]-uridylyl-L-tyrosine + H2O = [protein-PII]-L-tyrosine + UMP + H(+). With respect to regulation, uridylyltransferase (UTase) activity is inhibited by glutamine, while glutamine activates uridylyl-removing (UR) activity. Functionally, modifies, by uridylylation and deuridylylation, the PII regulatory proteins (GlnB and homologs), in response to the nitrogen status of the cell that GlnD senses through the glutamine level. Under low glutamine levels, catalyzes the conversion of the PII proteins and UTP to PII-UMP and PPi, while under higher glutamine levels, GlnD hydrolyzes PII-UMP to PII and UMP (deuridylylation). Thus, controls uridylylation state and activity of the PII proteins, and plays an important role in the regulation of nitrogen assimilation and metabolism. The chain is Bifunctional uridylyltransferase/uridylyl-removing enzyme from Vibrio parahaemolyticus serotype O3:K6 (strain RIMD 2210633).